The primary structure comprises 352 residues: Biotin synthase (352 aa).

A Radical SAM core domain is found at 44-262 (NRVQVSTLLS…LAVARILMPQ (219 aa)). The [4Fe-4S] cluster site is built by Cys59, Cys63, and Cys66. [2Fe-2S] cluster contacts are provided by Cys103, Cys134, Cys194, and Arg266.

It belongs to the radical SAM superfamily. Biotin synthase family. In terms of assembly, homodimer. Requires [4Fe-4S] cluster as cofactor. It depends on [2Fe-2S] cluster as a cofactor.

It catalyses the reaction (4R,5S)-dethiobiotin + (sulfur carrier)-SH + 2 reduced [2Fe-2S]-[ferredoxin] + 2 S-adenosyl-L-methionine = (sulfur carrier)-H + biotin + 2 5'-deoxyadenosine + 2 L-methionine + 2 oxidized [2Fe-2S]-[ferredoxin]. The protein operates within cofactor biosynthesis; biotin biosynthesis; biotin from 7,8-diaminononanoate: step 2/2. Catalyzes the conversion of dethiobiotin (DTB) to biotin by the insertion of a sulfur atom into dethiobiotin via a radical-based mechanism. The protein is Biotin synthase of Pseudomonas syringae pv. tomato (strain ATCC BAA-871 / DC3000).